A 791-amino-acid polypeptide reads, in one-letter code: Nuclear cap-binding protein subunit 1-B (791 aa).

A disordered region spans residues 1–24; sequence MSRRRHSDENDGGQPHKRRRTSEP. The MIF4G domain occupies 28–240; that stretch reads EDRLESLICR…CLWAQVQKLK (213 aa). Residues 641–714 adopt a coiled-coil conformation; sequence LHSTIRKMNK…SEQKNLFLVI (74 aa). The interval 664–687 is disordered; that stretch reads QRLAKQHKHRDSDDNDEDSGRKDG.

Belongs to the NCBP1 family. As to quaternary structure, component of the nuclear cap-binding complex (CBC), a heterodimer composed of ncbp1/cbp80 and ncbp2/cbp20 that interacts with m7GpppG-capped RNA. Component of an alternative nuclear cap-binding complex (CBC) composed of ncbp1/cbp80 and ncbp3.

It is found in the nucleus. Its subcellular location is the cytoplasm. Component of the cap-binding complex (CBC), which binds cotranscriptionally to the 5'-cap of pre-mRNAs and is involved in various processes such as pre-mRNA splicing, translation regulation, nonsense-mediated mRNA decay, RNA-mediated gene silencing (RNAi) by microRNAs (miRNAs) and mRNA export. The CBC complex is involved in mRNA export from the nucleus, leading to the recruitment of the mRNA export machinery to the 5'-end of mRNA and to mRNA export in a 5' to 3' direction through the nuclear pore. The CBC complex is also involved in mediating U snRNA and intronless mRNAs export from the nucleus. The CBC complex is essential for a pioneer round of mRNA translation, before steady state translation when the CBC complex is replaced by cytoplasmic cap-binding protein eIF4E. The pioneer round of mRNA translation mediated by the CBC complex plays a central role in nonsense-mediated mRNA decay (NMD), NMD only taking place in mRNAs bound to the CBC complex, but not on eIF4E-bound mRNAs. The CBC complex enhances NMD in mRNAs containing at least one exon-junction complex (EJC), promoting the interaction between UPF1 and UPF2. The CBC complex is also involved in 'failsafe' NMD, which is independent of the EJC complex, while it does not participate in Staufen-mediated mRNA decay (SMD). During cell proliferation, the CBC complex is also involved in microRNAs (miRNAs) biogenesis via its interaction with SRRT/ARS2 and is required for miRNA-mediated RNA interference. The CBC complex also acts as a negative regulator of parn, thereby acting as an inhibitor of mRNA deadenylation. In the CBC complex, NCBP1/CBP80 does not bind directly capped RNAs (m7GpppG-capped RNA) but is required to stabilize the movement of the N-terminal loop of NCBP2/CBP20 and lock the CBC into a high affinity cap-binding state with the cap structure. Associates with NCBP3 to form an alternative cap-binding complex (CBC) which plays a key role in mRNA export. The conventional CBC with NCBP2 binds both small nuclear RNA (snRNA) and messenger (mRNA) and is involved in their export from the nucleus whereas the alternative CBC with NCBP3 does not bind snRNA and associates only with mRNA thereby playing a role only in mRNA export. This chain is Nuclear cap-binding protein subunit 1-B (ncbp1-b), found in Xenopus laevis (African clawed frog).